Consider the following 369-residue polypeptide: MYQTVRPLLFRLDAEDAHHLTLRGLELASGVPLLPRLARTLTVPGTQGPGDAALRRTLWGQTPSEQTFESPLGLAAGLDKNAQAVPAFTAFGFGFVEVGTVTPLAQSGNERPRLFRLPEDEALINRMGFNNGGTAAMHARLAVLTDRAAPVWVNIGKNKVTPNEDAAEDYRKCVRALGDLADAFVVNVSSPNTPGLRALQAADDLAALVRAVLDEVEAGRVRTLRRPPVLVKLAPDLHPADFEASVGAVLDAGASGLIISNTTLSRGGLSHPNREQAGGLSGRPLTDRSTELVRDAYRLTRGQVPIVGVGGVFSAEDAYAKLLAGADLVEVYSALIYRGPGLVREINAGLVKLLERDGVRNIADVVGQG.

Residues 76-80 and T100 contribute to the FMN site; that span reads AGLDK. K80 contacts substrate. 125 to 129 is a binding site for substrate; that stretch reads NRMGF. Residues N154 and N187 each coordinate FMN. N187 is a binding site for substrate. The active-site Nucleophile is the S190. Residue N192 participates in substrate binding. K232 and S260 together coordinate FMN. 261-262 provides a ligand contact to substrate; that stretch reads NT. Residues G282, G311, and 332-333 contribute to the FMN site; that span reads YS.

The protein belongs to the dihydroorotate dehydrogenase family. Type 2 subfamily. As to quaternary structure, monomer. FMN serves as cofactor.

The protein localises to the cell membrane. The enzyme catalyses (S)-dihydroorotate + a quinone = orotate + a quinol. It participates in pyrimidine metabolism; UMP biosynthesis via de novo pathway; orotate from (S)-dihydroorotate (quinone route): step 1/1. In terms of biological role, catalyzes the conversion of dihydroorotate to orotate with quinone as electron acceptor. The chain is Dihydroorotate dehydrogenase (quinone) (pyrD) from Deinococcus radiodurans (strain ATCC 13939 / DSM 20539 / JCM 16871 / CCUG 27074 / LMG 4051 / NBRC 15346 / NCIMB 9279 / VKM B-1422 / R1).